Consider the following 151-residue polypeptide: UPF0208 membrane protein YfbV (151 aa).

Residues 1-45 (MSTPDNRSVNFFSLFRRGQHYAKTWPMEKRLAPVFVENRVIRMTR) lie on the Cytoplasmic side of the membrane. A helical transmembrane segment spans residues 46–65 (YAIRFMPPVAVFTLCWQIAL). Over 66-68 (GGQ) the chain is Periplasmic. Residues 69 to 91 (LGPAVATALFALSLPMQGLWWLG) form a helical membrane-spanning segment. Topologically, residues 92-151 (KRSLTPLPPSILNWFYEVRGKLQEAGQALAPVEGKPDYQALADTLKRAFKQLDKTFLDDL) are cytoplasmic.

Belongs to the UPF0208 family.

Its subcellular location is the cell inner membrane. The chain is UPF0208 membrane protein YfbV (yfbV) from Salmonella typhi.